The primary structure comprises 163 residues: Bacterial microcompartment assembly protein PduM (163 aa).

This sequence belongs to the PduM family. In terms of assembly, interacts with shell protein PduK.

The protein localises to the bacterial microcompartment. It functions in the pathway polyol metabolism; 1,2-propanediol degradation. Plays an essential role in assembly and/or stability of the bacterial microcompartment (BMC) dedicated to 1,2-propanediol (1,2-PD) degradation. Overexpression impairs BMC formation. Functionally, the 1,2-PD-specific bacterial microcompartment (BMC) concentrates low levels of 1,2-PD catabolic enzymes, concentrates volatile reaction intermediates thus enhancing pathway flux and keeps the level of toxic, mutagenic propionaldehyde low. The chain is Bacterial microcompartment assembly protein PduM from Salmonella typhimurium (strain LT2 / SGSC1412 / ATCC 700720).